A 428-amino-acid chain; its full sequence is ATP phosphoribosyltransferase regulatory subunit (428 aa).

The protein belongs to the class-II aminoacyl-tRNA synthetase family. HisZ subfamily. In terms of assembly, heteromultimer composed of HisG and HisZ subunits.

Its subcellular location is the cytoplasm. It participates in amino-acid biosynthesis; L-histidine biosynthesis; L-histidine from 5-phospho-alpha-D-ribose 1-diphosphate: step 1/9. Required for the first step of histidine biosynthesis. May allow the feedback regulation of ATP phosphoribosyltransferase activity by histidine. This Syntrophotalea carbinolica (strain DSM 2380 / NBRC 103641 / GraBd1) (Pelobacter carbinolicus) protein is ATP phosphoribosyltransferase regulatory subunit.